The following is a 198-amino-acid chain: Armadillo repeat-containing protein 7 (198 aa).

2 ARM repeats span residues Q57–G99 and V100–P140. The residue at position 169 (S169) is a Phosphoserine.

In terms of assembly, component of the minor spliceosome. Within this complex, interacts with RBM48.

In terms of biological role, as a component of the minor spliceosome, involved in the splicing of U12-type introns in pre-mRNAs. The protein is Armadillo repeat-containing protein 7 (ARMC7) of Homo sapiens (Human).